Reading from the N-terminus, the 477-residue chain is ATP synthase subunit beta, chloroplastic (477 aa).

156–163 (GGAGVGKT) is an ATP binding site.

This sequence belongs to the ATPase alpha/beta chains family. In terms of assembly, F-type ATPases have 2 components, CF(1) - the catalytic core - and CF(0) - the membrane proton channel. CF(1) has five subunits: alpha(3), beta(3), gamma(1), delta(1), epsilon(1). CF(0) has four main subunits: a(1), b(1), b'(1) and c(9-12).

The protein localises to the plastid. The protein resides in the chloroplast thylakoid membrane. The catalysed reaction is ATP + H2O + 4 H(+)(in) = ADP + phosphate + 5 H(+)(out). Produces ATP from ADP in the presence of a proton gradient across the membrane. The catalytic sites are hosted primarily by the beta subunits. This is ATP synthase subunit beta, chloroplastic from Bigelowiella natans (Pedinomonas minutissima).